Here is a 95-residue protein sequence, read N- to C-terminus: Large ribosomal subunit protein uL23 (95 aa).

This sequence belongs to the universal ribosomal protein uL23 family. As to quaternary structure, part of the 50S ribosomal subunit. Contacts protein L29, and trigger factor when it is bound to the ribosome.

Its function is as follows. One of the early assembly proteins it binds 23S rRNA. One of the proteins that surrounds the polypeptide exit tunnel on the outside of the ribosome. Forms the main docking site for trigger factor binding to the ribosome. The protein is Large ribosomal subunit protein uL23 of Desulforudis audaxviator (strain MP104C).